Reading from the N-terminus, the 92-residue chain is uncharacterized protein (92 aa).

A helical transmembrane segment spans residues 65–86; that stretch reads AVWIFWLCFLVSGLSRAFLVYF.

It localises to the membrane. This is an uncharacterized protein from Treponema pallidum (strain Nichols).